We begin with the raw amino-acid sequence, 505 residues long: RNA-splicing ligase RtcB homolog (505 aa).

Residues Asp119, Cys122, His227, and His259 each contribute to the Mn(2+) site. Residue 226–230 (NHYAE) coordinates GMP. Ser300 bears the Phosphoserine mark. A Mn(2+)-binding site is contributed by His353. GMP is bound by residues 353–354 (HN), 402–405 (GGTM), Ser409, and 428–431 (HGAG). Residue His428 is the GMP-histidine intermediate of the active site. A Glycyl lysine isopeptide (Lys-Gly) (interchain with G-Cter in SUMO2) cross-link involves residue Lys496. Residue Lys504 coordinates GMP.

It belongs to the RtcB family. As to quaternary structure, catalytic component of the tRNA-splicing ligase complex. Requires Mn(2+) as cofactor.

It localises to the nucleus. The protein localises to the cytoplasm. The enzyme catalyses a 3'-end 3'-phospho-ribonucleotide-RNA + a 5'-end dephospho-ribonucleoside-RNA + GTP = a ribonucleotidyl-ribonucleotide-RNA + GMP + diphosphate. It catalyses the reaction a 3'-end 2',3'-cyclophospho-ribonucleotide-RNA + a 5'-end dephospho-ribonucleoside-RNA + GTP + H2O = a ribonucleotidyl-ribonucleotide-RNA + GMP + diphosphate + H(+). In terms of biological role, catalytic subunit of the tRNA-splicing ligase complex that acts by directly joining spliced tRNA halves to mature-sized tRNAs by incorporating the precursor-derived splice junction phosphate into the mature tRNA as a canonical 3',5'-phosphodiester. May act as an RNA ligase with broad substrate specificity, and may function toward other RNAs. This is RNA-splicing ligase RtcB homolog from Macaca fascicularis (Crab-eating macaque).